Here is a 424-residue protein sequence, read N- to C-terminus: N-succinylarginine dihydrolase (424 aa).

Substrate contacts are provided by residues 19-28, N110, and 137-138; these read AGLSPGNIAS and HR. E174 is a catalytic residue. R207 is a substrate binding site. Residue H240 is part of the active site. Substrate contacts are provided by D242 and N349. C355 acts as the Nucleophile in catalysis.

The protein belongs to the succinylarginine dihydrolase family. As to quaternary structure, homodimer.

The catalysed reaction is N(2)-succinyl-L-arginine + 2 H2O + 2 H(+) = N(2)-succinyl-L-ornithine + 2 NH4(+) + CO2. The protein operates within amino-acid degradation; L-arginine degradation via AST pathway; L-glutamate and succinate from L-arginine: step 2/5. Functionally, catalyzes the hydrolysis of N(2)-succinylarginine into N(2)-succinylornithine, ammonia and CO(2). This Rhizorhabdus wittichii (strain DSM 6014 / CCUG 31198 / JCM 15750 / NBRC 105917 / EY 4224 / RW1) (Sphingomonas wittichii) protein is N-succinylarginine dihydrolase.